We begin with the raw amino-acid sequence, 430 residues long: 5-methylthioadenosine/S-adenosylhomocysteine deaminase (430 aa).

Residues His-59 and His-61 each coordinate Zn(2+). 2 residues coordinate substrate: Glu-88 and His-181. Residue His-208 coordinates Zn(2+). 2 residues coordinate substrate: Glu-211 and Asp-296. Asp-296 serves as a coordination point for Zn(2+).

Belongs to the metallo-dependent hydrolases superfamily. MTA/SAH deaminase family. Zn(2+) serves as cofactor.

It catalyses the reaction S-adenosyl-L-homocysteine + H2O + H(+) = S-inosyl-L-homocysteine + NH4(+). The catalysed reaction is S-methyl-5'-thioadenosine + H2O + H(+) = S-methyl-5'-thioinosine + NH4(+). Catalyzes the deamination of 5-methylthioadenosine and S-adenosyl-L-homocysteine into 5-methylthioinosine and S-inosyl-L-homocysteine, respectively. Is also able to deaminate adenosine. The chain is 5-methylthioadenosine/S-adenosylhomocysteine deaminase from Aquifex aeolicus (strain VF5).